Consider the following 279-residue polypeptide: MALKTFKPITPSLRQLVIVDRSNLYKGKPVKQLTEGKSSSGGRNNNGRVTVRFRGGGHKQTYRIIDFKRRKLDMPAKVERIEYDPNRTSFIALIRYADDELSYIIAPQKLAVGDEVISGQQVDVKPGNAMALANMPVGTIVHNIEMKIGKGAAMVRSAGTYAQVVGRDQGYVIVRLNSGEQRLIHGQCFATVGAVSNPDHMNASIGKAGRSRWLGRRPHNRGVTMNPVDHPHGGGEGRTSGGRHPVTPWGKPTKGKKTRTNKSTDKFIVTSRHKSKKKG.

Disordered regions lie at residues 29–49 (PVKQ…NGRV) and 202–279 (NASI…KKKG). Low complexity predominate over residues 36–49 (GKSSSGGRNNNGRV). Over residues 209–220 (GRSRWLGRRPHN) the composition is skewed to basic residues.

The protein belongs to the universal ribosomal protein uL2 family. In terms of assembly, part of the 50S ribosomal subunit. Forms a bridge to the 30S subunit in the 70S ribosome.

In terms of biological role, one of the primary rRNA binding proteins. Required for association of the 30S and 50S subunits to form the 70S ribosome, for tRNA binding and peptide bond formation. It has been suggested to have peptidyltransferase activity; this is somewhat controversial. Makes several contacts with the 16S rRNA in the 70S ribosome. The polypeptide is Large ribosomal subunit protein uL2 (Beijerinckia indica subsp. indica (strain ATCC 9039 / DSM 1715 / NCIMB 8712)).